The chain runs to 110 residues: NADH-quinone oxidoreductase subunit K (110 aa).

Helical transmembrane passes span 13–33 (LNHY…GLFM), 41–61 (ILMS…AFSV), and 73–93 (IIIL…LLIY).

This sequence belongs to the complex I subunit 4L family. NDH-1 is composed of 14 different subunits. Subunits NuoA, H, J, K, L, M, N constitute the membrane sector of the complex.

The protein localises to the cell inner membrane. The catalysed reaction is a quinone + NADH + 5 H(+)(in) = a quinol + NAD(+) + 4 H(+)(out). NDH-1 shuttles electrons from NADH, via FMN and iron-sulfur (Fe-S) centers, to quinones in the respiratory chain. The immediate electron acceptor for the enzyme in this species is believed to be ubiquinone. Couples the redox reaction to proton translocation (for every two electrons transferred, four hydrogen ions are translocated across the cytoplasmic membrane), and thus conserves the redox energy in a proton gradient. The sequence is that of NADH-quinone oxidoreductase subunit K from Rickettsia typhi (strain ATCC VR-144 / Wilmington).